The primary structure comprises 71 residues: DNA-directed RNA polymerase subunit epsilon (71 aa).

This sequence belongs to the RNA polymerase subunit epsilon family. In terms of assembly, monomer. RNAP is composed of a core of 2 alpha, a beta and a beta' subunit. The core is associated with a delta subunit, and at least one of epsilon or omega. When a sigma factor is associated with the core the holoenzyme is formed, which can initiate transcription.

It carries out the reaction RNA(n) + a ribonucleoside 5'-triphosphate = RNA(n+1) + diphosphate. Functionally, a non-essential component of RNA polymerase (RNAP). Has a similar structure to bacteriophage T7 protein Gp2 (AC P03704), which is known to bind to RNAP in the DNA binding-cleft. Unlike Gp2 however, this protein does not inhibit transcription initiation. In Geobacillus stearothermophilus (strain DSM 13240 / CIP 106956 / 10), this protein is DNA-directed RNA polymerase subunit epsilon.